The following is a 507-amino-acid chain: Acetylcholine receptor subunit beta-type lev-1 (507 aa).

An N-terminal signal peptide occupies residues 1–31; it reads MMLGGGGGCGAGGTWLGFLVFLAVSLRNHST. N-linked (GlcNAc...) asparagine glycans are attached at residues Asn28, Asn58, and Asn109. Residues 32 to 138 lie on the Extracellular side of the membrane; sequence CEDIDAEDRL…NNADGNYEVS (107 aa). A helical transmembrane segment spans residues 139 to 159; that stretch reads FMCNVLILSTGTVLWVPPAIY. Cys163 and Cys177 are joined by a disulfide. Helical transmembrane passes span 243–263, 271–291, and 305–325; these read VVLILPTVLMAFLNVTVFYLP, GLTMNVLLSIVVFLLLVSKIL, and LLLTFVLNIITIMVTTIICNI. The disordered stretch occupies residues 373–392; sequence GPSVEENPMRSGEHHPLCRH. Positions 379–392 are enriched in basic and acidic residues; sequence NPMRSGEHHPLCRH. Residues 454 to 474 form a helical membrane-spanning segment; it reads FLLYGFFGATVGGTIGIIFTA.

The protein belongs to the ligand-gated ion channel (TC 1.A.9) family. Acetylcholine receptor (TC 1.A.9.1) subfamily. As to quaternary structure, interacts with unc-29. Component of nicotinic acetylcholine receptor composed of 2 non-alpha subunits lev-1 and unc-29, and 3 alpha subunits unc-38, unc-63 and lev-8.

The protein resides in the postsynaptic cell membrane. It localises to the cell membrane. Non-alpha subunit of nicotinic acetylcholine receptor (nAChR). Involved in nAChR sensitivity to nicotine. This is Acetylcholine receptor subunit beta-type lev-1 (lev-1) from Caenorhabditis elegans.